A 176-amino-acid polypeptide reads, in one-letter code: Large ribosomal subunit protein uL6 (176 aa).

This sequence belongs to the universal ribosomal protein uL6 family. Part of the 50S ribosomal subunit.

This protein binds to the 23S rRNA, and is important in its secondary structure. It is located near the subunit interface in the base of the L7/L12 stalk, and near the tRNA binding site of the peptidyltransferase center. The protein is Large ribosomal subunit protein uL6 of Lacticaseibacillus paracasei (strain ATCC 334 / BCRC 17002 / CCUG 31169 / CIP 107868 / KCTC 3260 / NRRL B-441) (Lactobacillus paracasei).